A 423-amino-acid chain; its full sequence is UPF0229 protein PST_0721 (423 aa).

The segment at 84–109 is disordered; the sequence is AGERIPRPQGGGGGQGAGQASNSGEG.

Belongs to the UPF0229 family.

This chain is UPF0229 protein PST_0721, found in Stutzerimonas stutzeri (strain A1501) (Pseudomonas stutzeri).